The sequence spans 739 residues: Phosphoribosylformylglycinamidine synthase subunit PurL (739 aa).

Residue histidine 54 is part of the active site. ATP-binding residues include tyrosine 57 and lysine 96. Glutamate 98 is a Mg(2+) binding site. Residues 99–102 (SHNH) and arginine 121 each bind substrate. Histidine 100 (proton acceptor) is an active-site residue. Aspartate 122 serves as a coordination point for Mg(2+). Glutamine 245 is a binding site for substrate. Aspartate 273 lines the Mg(2+) pocket. 317–319 (ESQ) is a substrate binding site. Aspartate 500 and glycine 537 together coordinate ATP. Asparagine 538 contacts Mg(2+). Serine 540 serves as a coordination point for substrate.

The protein belongs to the FGAMS family. Monomer. Part of the FGAM synthase complex composed of 1 PurL, 1 PurQ and 2 PurS subunits.

The protein resides in the cytoplasm. It catalyses the reaction N(2)-formyl-N(1)-(5-phospho-beta-D-ribosyl)glycinamide + L-glutamine + ATP + H2O = 2-formamido-N(1)-(5-O-phospho-beta-D-ribosyl)acetamidine + L-glutamate + ADP + phosphate + H(+). Its pathway is purine metabolism; IMP biosynthesis via de novo pathway; 5-amino-1-(5-phospho-D-ribosyl)imidazole from N(2)-formyl-N(1)-(5-phospho-D-ribosyl)glycinamide: step 1/2. Part of the phosphoribosylformylglycinamidine synthase complex involved in the purines biosynthetic pathway. Catalyzes the ATP-dependent conversion of formylglycinamide ribonucleotide (FGAR) and glutamine to yield formylglycinamidine ribonucleotide (FGAM) and glutamate. The FGAM synthase complex is composed of three subunits. PurQ produces an ammonia molecule by converting glutamine to glutamate. PurL transfers the ammonia molecule to FGAR to form FGAM in an ATP-dependent manner. PurS interacts with PurQ and PurL and is thought to assist in the transfer of the ammonia molecule from PurQ to PurL. The sequence is that of Phosphoribosylformylglycinamidine synthase subunit PurL from Bacillus anthracis (strain A0248).